We begin with the raw amino-acid sequence, 622 residues long: DNA polymerase II small subunit (622 aa).

The segment at 76–113 (ISTGEGSQKVPDHEELEKITNESSVESSISTGETPKTE) is disordered. Residues 85–95 (VPDHEELEKIT) are compositionally biased toward basic and acidic residues. A compositionally biased stretch (polar residues) spans 96 to 109 (NESSVESSISTGET).

It belongs to the DNA polymerase delta/II small subunit family. Heterodimer of a large subunit and a small subunit.

It carries out the reaction DNA(n) + a 2'-deoxyribonucleoside 5'-triphosphate = DNA(n+1) + diphosphate. The enzyme catalyses Exonucleolytic cleavage in the 3'- to 5'-direction to yield nucleoside 5'-phosphates.. In terms of biological role, possesses two activities: a DNA synthesis (polymerase) and an exonucleolytic activity that degrades single-stranded DNA in the 3' to 5' direction. Has a template-primer preference which is characteristic of a replicative DNA polymerase. This is DNA polymerase II small subunit (polB) from Pyrococcus horikoshii (strain ATCC 700860 / DSM 12428 / JCM 9974 / NBRC 100139 / OT-3).